The sequence spans 59 residues: Dimethylamine corrinoid protein (59 aa).

The B12-binding domain occupies 1 to 59 (TLQGQKDVIELLKEEGLRDKIKVMVGGAPATQAWADKIGADCYAENASEAVAKAKELLA).

The protein belongs to the methylamine corrinoid protein family.

Its pathway is one-carbon metabolism; methanogenesis from dimethylamine. Its function is as follows. Acts as a methyl group carrier between MtbB and MtbA. The sequence is that of Dimethylamine corrinoid protein (mtbC) from Methanosarcina thermophila.